A 605-amino-acid polypeptide reads, in one-letter code: Bifunctional purine biosynthesis protein ADE16 (605 aa).

The MGS-like domain maps to 1–147 (MSSEAPIALL…KNHGRVSIIS (147 aa)). IMP contacts are provided by residues 35-38 (SGGT), 65-68 (RVKT), 102-103 (CN), and 126-127 (DI). Lys-138 acts as the Proton donor/acceptor; for FAICAR cyclization activity in catalysis. 5-amino-1-(5-phospho-beta-D-ribosyl)imidazole-4-carboxamide is bound by residues 219-220 (RY), His-279, Gly-327, Asp-350, Asn-442, and Arg-462. The active-site Proton acceptor; for AICAR formyltransferase activity is His-279. Ile-463 is a (6R)-10-formyltetrahydrofolate binding site. Phe-554 provides a ligand contact to 5-amino-1-(5-phospho-beta-D-ribosyl)imidazole-4-carboxamide. Asp-559 provides a ligand contact to (6R)-10-formyltetrahydrofolate. Arg-601 is a binding site for 5-amino-1-(5-phospho-beta-D-ribosyl)imidazole-4-carboxamide.

It belongs to the PurH family. In terms of assembly, homodimer.

Its subcellular location is the cytoplasm. It localises to the cytosol. It carries out the reaction (6R)-10-formyltetrahydrofolate + 5-amino-1-(5-phospho-beta-D-ribosyl)imidazole-4-carboxamide = 5-formamido-1-(5-phospho-D-ribosyl)imidazole-4-carboxamide + (6S)-5,6,7,8-tetrahydrofolate. It catalyses the reaction IMP + H2O = 5-formamido-1-(5-phospho-D-ribosyl)imidazole-4-carboxamide. It functions in the pathway purine metabolism; IMP biosynthesis via de novo pathway; 5-formamido-1-(5-phospho-D-ribosyl)imidazole-4-carboxamide from 5-amino-1-(5-phospho-D-ribosyl)imidazole-4-carboxamide (10-formyl THF route): step 1/1. The protein operates within purine metabolism; IMP biosynthesis via de novo pathway; IMP from 5-formamido-1-(5-phospho-D-ribosyl)imidazole-4-carboxamide: step 1/1. Functionally, bifunctional enzyme that catalyzes the last two steps of purine biosynthesis. Acts as a transformylase that incorporates a formyl group to the AMP analog AICAR (5-amino-1-(5-phospho-beta-D-ribosyl)imidazole-4-carboxamide) to produce the intermediate formyl-AICAR (FAICAR). Also catalyzes the cyclization of FAICAR to IMP. The polypeptide is Bifunctional purine biosynthesis protein ADE16 (Cryptococcus neoformans var. grubii serotype A (strain H99 / ATCC 208821 / CBS 10515 / FGSC 9487) (Filobasidiella neoformans var. grubii)).